The following is a 221-amino-acid chain: Large ribosomal subunit protein uL16A (221 aa).

Belongs to the universal ribosomal protein uL16 family. Component of the large ribosomal subunit (LSU). Mature yeast ribosomes consist of a small (40S) and a large (60S) subunit. The 40S small subunit contains 1 molecule of ribosomal RNA (18S rRNA) and at least 33 different proteins. The large 60S subunit contains 3 rRNA molecules (25S, 5.8S and 5S rRNA) and at least 46 different proteins.

It is found in the cytoplasm. Its function is as follows. Component of the ribosome, a large ribonucleoprotein complex responsible for the synthesis of proteins in the cell. The small ribosomal subunit (SSU) binds messenger RNAs (mRNAs) and translates the encoded message by selecting cognate aminoacyl-transfer RNA (tRNA) molecules. The large subunit (LSU) contains the ribosomal catalytic site termed the peptidyl transferase center (PTC), which catalyzes the formation of peptide bonds, thereby polymerizing the amino acids delivered by tRNAs into a polypeptide chain. The nascent polypeptides leave the ribosome through a tunnel in the LSU and interact with protein factors that function in enzymatic processing, targeting, and the membrane insertion of nascent chains at the exit of the ribosomal tunnel. The chain is Large ribosomal subunit protein uL16A (rpl1001) from Schizosaccharomyces pombe (strain 972 / ATCC 24843) (Fission yeast).